Consider the following 218-residue polypeptide: Octanoyltransferase (218 aa).

The BPL/LPL catalytic domain occupies 32–211 (INTYDEIWFL…KLSQLLNVSI (180 aa)). Substrate contacts are provided by residues 75 to 82 (RGGQITYH), 142 to 144 (SLG), and 155 to 157 (GLS). Cys-173 serves as the catalytic Acyl-thioester intermediate.

Belongs to the LipB family.

The protein resides in the cytoplasm. The catalysed reaction is octanoyl-[ACP] + L-lysyl-[protein] = N(6)-octanoyl-L-lysyl-[protein] + holo-[ACP] + H(+). The protein operates within protein modification; protein lipoylation via endogenous pathway; protein N(6)-(lipoyl)lysine from octanoyl-[acyl-carrier-protein]: step 1/2. Its function is as follows. Catalyzes the transfer of endogenously produced octanoic acid from octanoyl-acyl-carrier-protein onto the lipoyl domains of lipoate-dependent enzymes. Lipoyl-ACP can also act as a substrate although octanoyl-ACP is likely to be the physiological substrate. This Buchnera aphidicola subsp. Schizaphis graminum (strain Sg) protein is Octanoyltransferase.